Consider the following 175-residue polypeptide: Macro domain-containing protein TTE0995 (175 aa).

The Macro domain occupies 1–174; the sequence is MKEKIKLIKG…VYSKAYEELD (174 aa).

This sequence belongs to the MacroD-type family.

The sequence is that of Macro domain-containing protein TTE0995 from Caldanaerobacter subterraneus subsp. tengcongensis (strain DSM 15242 / JCM 11007 / NBRC 100824 / MB4) (Thermoanaerobacter tengcongensis).